Consider the following 475-residue polypeptide: UDP-N-acetylmuramate--L-alanine ligase (475 aa).

125-131 (GTHGKTT) contacts ATP.

This sequence belongs to the MurCDEF family.

The protein localises to the cytoplasm. It catalyses the reaction UDP-N-acetyl-alpha-D-muramate + L-alanine + ATP = UDP-N-acetyl-alpha-D-muramoyl-L-alanine + ADP + phosphate + H(+). Its pathway is cell wall biogenesis; peptidoglycan biosynthesis. Cell wall formation. The polypeptide is UDP-N-acetylmuramate--L-alanine ligase (Actinobacillus pleuropneumoniae serotype 7 (strain AP76)).